A 106-amino-acid chain; its full sequence is Heat shock protein HspQ (106 aa).

The tract at residues 80–106 (DEHLDNDSMDELSQSIRNQLQAPRLRN) is disordered. Positions 90–100 (ELSQSIRNQLQ) are enriched in polar residues.

Belongs to the HspQ family.

Its subcellular location is the cytoplasm. Functionally, involved in the degradation of certain denaturated proteins, including DnaA, during heat shock stress. This is Heat shock protein HspQ from Proteus mirabilis (strain HI4320).